A 350-amino-acid chain; its full sequence is Lipoyl synthase (350 aa).

Residues 1–39 (MSDTSSPKPVASGEKFRTAQGITAIKDGQKRRASAEPQV) form a disordered region. The [4Fe-4S] cluster site is built by cysteine 73, cysteine 78, cysteine 84, cysteine 99, cysteine 103, cysteine 106, and serine 314. The region spanning 85–303 (WSNGTATIML…RDIGLEKGFM (219 aa)) is the Radical SAM core domain.

The protein belongs to the radical SAM superfamily. Lipoyl synthase family. Requires [4Fe-4S] cluster as cofactor.

Its subcellular location is the cytoplasm. It carries out the reaction [[Fe-S] cluster scaffold protein carrying a second [4Fe-4S](2+) cluster] + N(6)-octanoyl-L-lysyl-[protein] + 2 oxidized [2Fe-2S]-[ferredoxin] + 2 S-adenosyl-L-methionine + 4 H(+) = [[Fe-S] cluster scaffold protein] + N(6)-[(R)-dihydrolipoyl]-L-lysyl-[protein] + 4 Fe(3+) + 2 hydrogen sulfide + 2 5'-deoxyadenosine + 2 L-methionine + 2 reduced [2Fe-2S]-[ferredoxin]. It participates in protein modification; protein lipoylation via endogenous pathway; protein N(6)-(lipoyl)lysine from octanoyl-[acyl-carrier-protein]: step 2/2. In terms of biological role, catalyzes the radical-mediated insertion of two sulfur atoms into the C-6 and C-8 positions of the octanoyl moiety bound to the lipoyl domains of lipoate-dependent enzymes, thereby converting the octanoylated domains into lipoylated derivatives. The protein is Lipoyl synthase of Ectopseudomonas mendocina (strain ymp) (Pseudomonas mendocina).